Consider the following 662-residue polypeptide: Glutathione hydrolase 7 (662 aa).

The Cytoplasmic segment spans residues 1-106 (MAAENEASQE…AAECSCRQDG (106 aa)). Phosphoserine is present on residues S17, S72, S79, and S83. The interval 26–90 (SFPRLPEDEP…DGSPLRETRK (65 aa)) is disordered. Residues 72–83 (SSSSEMGSQDGS) show a composition bias toward low complexity. The chain crosses the membrane as a helical; Signal-anchor for type II membrane protein span at residues 107-127 (LTVIVTACLTFATGVTVALVM). The Extracellular segment spans residues 128–662 (QIYFGDPQIF…SPDAAGATIL (535 aa)). 9 N-linked (GlcNAc...) asparagine glycosylation sites follow: N198, N267, N283, N330, N353, N394, N519, N523, and N586.

The protein belongs to the gamma-glutamyltransferase family. Heterodimer composed of the light and heavy chains. The active site is located in the light chain. In terms of processing, cleaved by autocatalysis into a large and a small subunit and the autocatalytic cleavage is essential to the functional activation of the enzyme.

The protein resides in the membrane. It carries out the reaction an N-terminal (5-L-glutamyl)-[peptide] + an alpha-amino acid = 5-L-glutamyl amino acid + an N-terminal L-alpha-aminoacyl-[peptide]. The catalysed reaction is glutathione + H2O = L-cysteinylglycine + L-glutamate. It catalyses the reaction an S-substituted glutathione + H2O = an S-substituted L-cysteinylglycine + L-glutamate. The protein operates within sulfur metabolism; glutathione metabolism. Its function is as follows. Hydrolyzes and transfers gamma-glutamyl moieties from glutathione and other gamma-glutamyl compounds to acceptors. The polypeptide is Glutathione hydrolase 7 (Mus musculus (Mouse)).